The following is a 1209-amino-acid chain: Calcium-activated potassium channel subunit alpha-1 (1209 aa).

Over residues 1 to 23 (MANGGGGGGGSSGGGGGGGGGSG) the composition is skewed to gly residues. A disordered region spans residues 1-61 (MANGGGGGGG…SSSSSSSSSV (61 aa)). At 1 to 86 (MANGGGGGGG…VPCDSRGQRM (86 aa)) the chain is on the extracellular side. The span at 25–39 (RMSSNIHANNLSLDA) shows a compositional bias: polar residues. The span at 40–60 (SSSSSSSSSSSSSSSSSSSSS) shows a compositional bias: low complexity. A helical transmembrane segment spans residues 87 to 107 (WWAFLASSMVTFFGGLFIILL). Residues 108-178 (WRTLKYLWTV…MISAQTLTGR (71 aa)) lie on the Cytoplasmic side of the membrane. Residues Cys-118, Cys-119, and Cys-121 are each lipidated (S-palmitoyl cysteine). The helical transmembrane segment at 179–199 (VLVVLVFALSIGALVIYFIDS) threads the bilayer. Residues 200–214 (SNPIESCQNFYKDFT) lie on the Extracellular side of the membrane. Residues 215 to 235 (LQIDMAFNVFFLLYFGLRFIA) form a helical membrane-spanning segment. Topologically, residues 236–239 (ANDK) are cytoplasmic. Residues 240–260 (LWFWLEVNSVVDFFTVPPVFV) form a helical membrane-spanning segment. At 261–264 (SVYL) the chain is on the extracellular side. The chain crosses the membrane as a helical; Voltage-sensor span at residues 265 to 285 (NRSWLGLRFLRALRLIQFSEI). Over 286-300 (LQFLNILKTSNSIKL) the chain is Cytoplasmic. A helical membrane pass occupies residues 301–321 (VNLLSIFISTWLTAAGFIHLV). Residues 322-335 (ENSGDPWENFQNNQ) are Extracellular-facing. An intramembrane region (pore-forming) is located at residues 336 to 358 (ALTYWECVYLLMVTMSTVGYGDV). The short motif at 352 to 355 (TVGY) is the Selectivity for potassium element. Residues 359–367 (YAKTTLGRL) lie on the Extracellular side of the membrane. Residues 368–388 (FMVFFILGGLAMFASYVPEII) traverse the membrane as a helical segment. Residues 389-1209 (ELIGNRKKYG…KQNRKEMVYR (821 aa)) lie on the Cytoplasmic side of the membrane. Residues 407 to 549 (RKHIVVCGHI…WNWKEGDDAI (143 aa)) enclose the RCK N-terminal 1 domain. Residues Glu-439, Gln-462, and Glu-464 each contribute to the Mg(2+) site. The segment at 556 to 576 (LGFIAQSCLAQGLSTMLANLF) is segment S7. A segment S8 region spans residues 613–633 (LSFPTVCELCFVKLKLLMIAI). The residue at position 670 (Asp-670) is a Phosphothreonine. Lys-672 bears the Phosphoserine mark. The segment at 681-685 (CKACH) is heme-binding motif. A disordered region spans residues 703 to 733 (EDEQPPTLSPKKKQRNGGMRNSPNTSPKLMR). Residue Thr-709 is modified to Phosphothreonine. Phosphoserine is present on residues Ser-711, Ser-724, and Ser-728. The tract at residues 783-803 (VLSGHVVVCIFGDVSSALIGL) is segment S9. One can recognise an RCK N-terminal 2 domain in the interval 785–929 (SGHVVVCIFG…MDRSSPDNSP (145 aa)). Residue Thr-916 is modified to Phosphothreonine. Ser-924 and Ser-928 each carry phosphoserine. The Calcium bowl motif lies at 976–998 (TELVNDTNVQFLDQDDDDDPDTE). Ca(2+) contacts are provided by Gln-985, Asp-988, Asp-991, and Asp-993. The segment at 1005–1025 (FACGTAFAVSVLDSLMSATYF) is segment S10. A compositionally biased stretch (low complexity) spans 1159–1184 (RASLSHSSHSSQSSSKKSSSVHSIPS). Positions 1159-1209 (RASLSHSSHSSQSSSKKSSSVHSIPSTANRPNRPKSRESRDKQNRKEMVYR) are disordered. Residues 1193–1209 (KSRESRDKQNRKEMVYR) show a composition bias toward basic and acidic residues. A phosphoserine mark is found at Ser-1194 and Ser-1197.

This sequence belongs to the potassium channel family. Calcium-activated (TC 1.A.1.3) subfamily. KCa1.1/KCNMA1 sub-subfamily. As to quaternary structure, homotetramer; which constitutes the calcium-activated potassium channel. Interacts with beta subunits KCNMB1, KCNMB2, KCNMB3 and KCNMB4. Interacts with gamma subunits LRRC26, LRRC38, LRRC52 and LRRC55. Beta and gamma subunits are accessory, and modulate its activity. Interacts with RAB11B. Post-translationally, phosphorylated. Phosphorylation by kinases such as PKA and/or PKG. In smooth muscles, phosphorylation affects its activity. Palmitoylation by ZDHHC22 and ZDHHC23 within the intracellular linker between the S0 and S1 transmembrane domains regulates localization to the plasma membrane. Depalmitoylated by LYPLA1 and LYPLAL1, leading to retard exit from the trans-Golgi network.

Its subcellular location is the cell membrane. It carries out the reaction K(+)(in) = K(+)(out). Ethanol and carbon monoxide-bound heme increase channel activation. Heme inhibits channel activation. In terms of biological role, potassium channel activated by both membrane depolarization or increase in cytosolic Ca(2+) that mediates export of K(+). It is also activated by the concentration of cytosolic Mg(2+). Its activation dampens the excitatory events that elevate the cytosolic Ca(2+) concentration and/or depolarize the cell membrane. It therefore contributes to repolarization of the membrane potential. Plays a key role in controlling excitability in a number of systems, such as regulation of the contraction of smooth muscle, the tuning of hair cells in the cochlea, regulation of transmitter release, and innate immunity. In smooth muscles, its activation by high level of Ca(2+), caused by ryanodine receptors in the sarcoplasmic reticulum, regulates the membrane potential. In cochlea cells, its number and kinetic properties partly determine the characteristic frequency of each hair cell and thereby helps to establish a tonotopic map. Kinetics of KCNMA1 channels are determined by alternative splicing, phosphorylation status and its combination with modulating beta subunits. Highly sensitive to both iberiotoxin (IbTx) and charybdotoxin (CTX). Functionally, potassium channel activated by both membrane depolarization or increase in cytosolic Ca(2+) that mediates export of K(+). The polypeptide is Calcium-activated potassium channel subunit alpha-1 (Kcnma1) (Mus musculus (Mouse)).